Here is a 480-residue protein sequence, read N- to C-terminus: Ribulose bisphosphate carboxylase large chain (480 aa).

The propeptide occupies 1–2 (MS). N-acetylproline is present on proline 3. Position 14 is an N6,N6,N6-trimethyllysine (lysine 14). 2 residues coordinate substrate: asparagine 123 and threonine 173. Lysine 175 acts as the Proton acceptor in catalysis. Lysine 177 contacts substrate. Mg(2+)-binding residues include lysine 201, aspartate 203, and glutamate 204. Position 201 is an N6-carboxylysine (lysine 201). Catalysis depends on histidine 294, which acts as the Proton acceptor. Arginine 295, histidine 327, and serine 379 together coordinate substrate.

Belongs to the RuBisCO large chain family. Type I subfamily. As to quaternary structure, heterohexadecamer of 8 large chains and 8 small chains; disulfide-linked. The disulfide link is formed within the large subunit homodimers. The cofactor is Mg(2+). Post-translationally, the disulfide bond which can form in the large chain dimeric partners within the hexadecamer appears to be associated with oxidative stress and protein turnover.

The protein resides in the plastid. It localises to the chloroplast. The catalysed reaction is 2 (2R)-3-phosphoglycerate + 2 H(+) = D-ribulose 1,5-bisphosphate + CO2 + H2O. It catalyses the reaction D-ribulose 1,5-bisphosphate + O2 = 2-phosphoglycolate + (2R)-3-phosphoglycerate + 2 H(+). In terms of biological role, ruBisCO catalyzes two reactions: the carboxylation of D-ribulose 1,5-bisphosphate, the primary event in carbon dioxide fixation, as well as the oxidative fragmentation of the pentose substrate in the photorespiration process. Both reactions occur simultaneously and in competition at the same active site. This is Ribulose bisphosphate carboxylase large chain from Alluaudia procera (Madagascan ocotillo).